We begin with the raw amino-acid sequence, 136 residues long: Small ribosomal subunit protein uS12 (136 aa).

The segment at 1–28 (MPTIQQLIRSERQELKKKTKSPALKSCP) is disordered. 3-methylthioaspartic acid is present on aspartate 89. The disordered stretch occupies residues 101–136 (TLDTAGVKDRKQGRSKYGAKRPKPGAASTASTGKKR). Over residues 113-123 (GRSKYGAKRPK) the composition is skewed to basic residues.

It belongs to the universal ribosomal protein uS12 family. In terms of assembly, part of the 30S ribosomal subunit. Contacts proteins S8 and S17. May interact with IF1 in the 30S initiation complex.

With S4 and S5 plays an important role in translational accuracy. Its function is as follows. Interacts with and stabilizes bases of the 16S rRNA that are involved in tRNA selection in the A site and with the mRNA backbone. Located at the interface of the 30S and 50S subunits, it traverses the body of the 30S subunit contacting proteins on the other side and probably holding the rRNA structure together. The combined cluster of proteins S8, S12 and S17 appears to hold together the shoulder and platform of the 30S subunit. This chain is Small ribosomal subunit protein uS12, found in Cyanothece sp. (strain PCC 7425 / ATCC 29141).